Reading from the N-terminus, the 508-residue chain is WD repeat-containing protein JIP5 (508 aa).

WD repeat units lie at residues 62–105 (EARK…WRTK), 106–145 (RHKG…VVKK), 149–188 (DGGS…TKNT), 193–233 (HGGD…MKQP), 253–294 (DQED…LEDQ), and 345–382 (SGLD…NSDS). Positions 376-508 (KEENSDSDSD…SHGITKFDGL (133 aa)) are disordered. Residues 380-393 (SDSDSDSDINDDSE) show a composition bias toward acidic residues. The segment covering 407–419 (ELGSGSESEVESD) has biased composition (low complexity). A WD 7 repeat occupies 431-472 (CTGSDLPGDIEGSEGENNSNDDDNHDDREELWKELDQPTSDE). Residues 441 to 454 (EGSEGENNSNDDDN) are compositionally biased toward acidic residues. A compositionally biased stretch (basic and acidic residues) spans 455–466 (HDDREELWKELD). Over residues 478–492 (KRSLKVKDKKNKKFK) the composition is skewed to basic residues.

It belongs to the WD repeat WDR55 family.

It is found in the nucleus. Its subcellular location is the nucleolus. The protein is WD repeat-containing protein JIP5 (JIP5) of Candida glabrata (strain ATCC 2001 / BCRC 20586 / JCM 3761 / NBRC 0622 / NRRL Y-65 / CBS 138) (Yeast).